The sequence spans 867 residues: DNA mismatch repair protein MutS (867 aa).

609 to 616 (GPNMSGKS) serves as a coordination point for ATP.

The protein belongs to the DNA mismatch repair MutS family.

Its function is as follows. This protein is involved in the repair of mismatches in DNA. It is possible that it carries out the mismatch recognition step. This protein has a weak ATPase activity. The sequence is that of DNA mismatch repair protein MutS from Latilactobacillus sakei subsp. sakei (strain 23K) (Lactobacillus sakei subsp. sakei).